The following is a 300-amino-acid chain: Ribosomal protein L11 methyltransferase (300 aa).

S-adenosyl-L-methionine contacts are provided by Thr-152, Gly-173, Asp-195, and Asn-234.

The protein belongs to the methyltransferase superfamily. PrmA family.

It is found in the cytoplasm. It carries out the reaction L-lysyl-[protein] + 3 S-adenosyl-L-methionine = N(6),N(6),N(6)-trimethyl-L-lysyl-[protein] + 3 S-adenosyl-L-homocysteine + 3 H(+). Functionally, methylates ribosomal protein L11. This Burkholderia multivorans (strain ATCC 17616 / 249) protein is Ribosomal protein L11 methyltransferase.